Here is a 516-residue protein sequence, read N- to C-terminus: Bifunctional pantoate ligase/cytidylate kinase (516 aa).

Positions 1–279 are pantoate--beta-alanine ligase; the sequence is MVRKIFQTNA…CGSTRLIDHT (279 aa). Residue 29–36 participates in ATP binding; the sequence is MGGLHPGH. H36 functions as the Proton donor in the catalytic mechanism. Residue Q64 coordinates (R)-pantoate. Q64 is a binding site for beta-alanine. 153–156 contacts ATP; sequence GEKD. Position 159 (Q159) interacts with (R)-pantoate. Residue 190-193 coordinates ATP; it reads YSSR. Positions 280–516 are cytidylate kinase; the sequence is FLMHRKPIIA…PEEVWPTPNS (237 aa).

The protein in the N-terminal section; belongs to the pantothenate synthetase family. This sequence in the C-terminal section; belongs to the cytidylate kinase family. Type 1 subfamily.

It localises to the cytoplasm. The enzyme catalyses (R)-pantoate + beta-alanine + ATP = (R)-pantothenate + AMP + diphosphate + H(+). The catalysed reaction is CMP + ATP = CDP + ADP. It carries out the reaction dCMP + ATP = dCDP + ADP. The protein operates within cofactor biosynthesis; (R)-pantothenate biosynthesis; (R)-pantothenate from (R)-pantoate and beta-alanine: step 1/1. Catalyzes the condensation of pantoate with beta-alanine in an ATP-dependent reaction via a pantoyl-adenylate intermediate. Functionally, catalyzes the transfer of a phosphate group from ATP to either CMP or dCMP to form CDP or dCDP and ADP, respectively. The protein is Bifunctional pantoate ligase/cytidylate kinase of Prochlorococcus marinus (strain NATL1A).